The sequence spans 118 residues: Large ribosomal subunit protein uL18 (118 aa).

The span at 1–10 (MKTTRRDATR) shows a compositional bias: basic and acidic residues. The segment at 1-20 (MKTTRRDATRSRHQRVRRKV) is disordered. Residues 11–20 (SRHQRVRRKV) are compositionally biased toward basic residues.

This sequence belongs to the universal ribosomal protein uL18 family. In terms of assembly, part of the 50S ribosomal subunit; part of the 5S rRNA/L5/L18/L25 subcomplex. Contacts the 5S and 23S rRNAs.

Functionally, this is one of the proteins that bind and probably mediate the attachment of the 5S RNA into the large ribosomal subunit, where it forms part of the central protuberance. The protein is Large ribosomal subunit protein uL18 of Acaryochloris marina (strain MBIC 11017).